Consider the following 509-residue polypeptide: Maturase K (509 aa).

Belongs to the intron maturase 2 family. MatK subfamily.

It is found in the plastid. It localises to the chloroplast. In terms of biological role, usually encoded in the trnK tRNA gene intron. Probably assists in splicing its own and other chloroplast group II introns. In Amentotaxus argotaenia (Chinese flowering yew), this protein is Maturase K.